Consider the following 381-residue polypeptide: uncharacterized protein (381 aa).

The tract at residues 176–292 is disordered; that stretch reads HAAGKIKKSK…EPMVDETPQN (117 aa). Positions 177–186 are enriched in basic residues; it reads AAGKIKKSKN. Positions 187 to 212 are enriched in basic and acidic residues; that stretch reads QKKDGTLSRPLGKKENKSVVKVKIEE. Residues 276-286 show a composition bias toward acidic residues; sequence DEEDEDEEPMV.

This is an uncharacterized protein from Caenorhabditis elegans.